The following is a 183-amino-acid chain: TATA-box-binding protein 2 (183 aa).

Repeat copies occupy residues 8-84 (IENV…AKKL) and 99-177 (VQNI…RQQL).

It belongs to the TBP family.

In terms of biological role, general factor that plays a role in the activation of archaeal genes transcribed by RNA polymerase. Binds specifically to the TATA box promoter element which lies close to the position of transcription initiation. The protein is TATA-box-binding protein 2 of Methanosarcina mazei (strain ATCC BAA-159 / DSM 3647 / Goe1 / Go1 / JCM 11833 / OCM 88) (Methanosarcina frisia).